A 130-amino-acid chain; its full sequence is Probable pilin MJ0835.1 (130 aa).

Positions 1–14 (MNTMENKIIKSKKA) are excised as a propeptide. The QXSXEXXXL signature appears at 15-23 (QVSLEFSFL).

Post-translationally, the N-terminus is cleaved by the prepilin peptidase EppA, which recognizes the class III signal sequence.

The protein resides in the secreted. It is found in the cell surface. The protein localises to the fimbrium. This is Probable pilin MJ0835.1 from Methanocaldococcus jannaschii (strain ATCC 43067 / DSM 2661 / JAL-1 / JCM 10045 / NBRC 100440) (Methanococcus jannaschii).